A 42-amino-acid polypeptide reads, in one-letter code: Photosystem I reaction center subunit IX (42 aa).

Residues 7 to 27 form a helical membrane-spanning segment; that stretch reads FLSLGPVLLVLWLSVQATLLI.

It belongs to the PsaJ family.

The protein resides in the cellular thylakoid membrane. In terms of biological role, may help in the organization of the PsaE and PsaF subunits. This Gloeothece citriformis (strain PCC 7424) (Cyanothece sp. (strain PCC 7424)) protein is Photosystem I reaction center subunit IX.